A 534-amino-acid polypeptide reads, in one-letter code: Nuclear polyadenylated RNA-binding protein 4 (534 aa).

Positions 1-154 (MSSDEEDFND…TKEERSKADL (154 aa)) are disordered. A phosphoserine mark is found at serine 2 and serine 3. Residues 13–30 (GDDKPTTTEEVKKEEEQN) are compositionally biased toward basic and acidic residues. Over residues 37–78 (SQLDQLAALQALSSSLNKLNNPNSNNSSSNNSNQDTSSSKQD) the composition is skewed to low complexity. Serine 51 and serine 87 each carry phosphoserine. Over residues 81–98 (ANDKEGSNEDTKNEKKQE) the composition is skewed to basic and acidic residues. Low complexity-rich tracts occupy residues 99–112 (SATS…ASSA) and 121–144 (QLQQ…QVTQ). Positions 145-154 (TKEERSKADL) are enriched in basic and acidic residues. 2 RRM domains span residues 159 to 241 (CKMF…EQDK) and 243 to 320 (GKIF…RAEP). Serine 206 is subject to Phosphoserine. Disordered stretches follow at residues 316 to 354 (KRAE…DFNQ) and 415 to 534 (MPPN…PYNR). The segment covering 336 to 354 (GNNMNRRGGNFGNQGDFNQ) has biased composition (low complexity). The segment covering 420 to 459 (MTLNQPQQDSNATQGSPAPSDSDNNKSNDVQTIGNTSNTD) has biased composition (polar residues). Threonine 458 carries the post-translational modification Phosphothreonine. Phosphoserine is present on residues serine 460 and serine 462. The span at 460-475 (SGSPPLNLPNGPKGPS) shows a compositional bias: low complexity. The segment covering 478–505 (NDDHNSGYGYNRDRGDRDRNDRDRDYNH) has biased composition (basic and acidic residues). Arginine 519 is modified (omega-N-methylarginine). Residues 523–534 (NRRNNGYHPYNR) show a composition bias toward low complexity.

In terms of assembly, interacts with NAM7. Methylated by HMT1. The methylation is required for nuclear export.

The protein localises to the cytoplasm. The protein resides in the nucleus. Its subcellular location is the stress granule. Its function is as follows. RNA-binding protein, which is involved in the polyadenylation-dependent pre-mRNA 3'-end formation and cooperates with the cleavage factor CFIA complex and the cleavage and polyadenylation factor (CPF) complex. May be involved in regulation of poly(A) site selection. Is involved in nonsense-mediated mRNA decay. Seems to bind to an RNA downstream sequence element (DSE) located 3' of a nonsense codon and may mark the transcript for decay. The chain is Nuclear polyadenylated RNA-binding protein 4 from Saccharomyces cerevisiae (strain ATCC 204508 / S288c) (Baker's yeast).